Here is a 304-residue protein sequence, read N- to C-terminus: ATP phosphoribosyltransferase (304 aa).

This sequence belongs to the ATP phosphoribosyltransferase family.

Its subcellular location is the cytoplasm. It carries out the reaction 1-(5-phospho-beta-D-ribosyl)-ATP + diphosphate = 5-phospho-alpha-D-ribose 1-diphosphate + ATP. The protein operates within amino-acid biosynthesis; L-histidine biosynthesis; L-histidine from 5-phospho-alpha-D-ribose 1-diphosphate: step 1/9. In terms of biological role, catalyzes the condensation of ATP and 5-phosphoribose 1-diphosphate to form N'-(5'-phosphoribosyl)-ATP (PR-ATP). Has a crucial role in the pathway because the rate of histidine biosynthesis seems to be controlled primarily by regulation of the enzymatic activity. This is ATP phosphoribosyltransferase (HIS1) from Debaryomyces hansenii (strain ATCC 36239 / CBS 767 / BCRC 21394 / JCM 1990 / NBRC 0083 / IGC 2968) (Yeast).